The primary structure comprises 137 residues: Probable leaf thionin (137 aa).

Residues 1–28 form the signal peptide; that stretch reads MATNKSIKSVVICVLILGLVLEQVQVEG. 4 disulfides stabilise this stretch: C31–C68, C32–C60, C40–C58, and C44–C54. Positions 75-137 are cleaved as a propeptide — acidic domain; the sequence is LNLLPESGEP…DGDVIQSVEA (63 aa).

This sequence belongs to the plant thionin (TC 1.C.44) family. 4 C-C subfamily.

It localises to the secreted. In terms of biological role, thionins are small plant proteins which are toxic to animal cells. They seem to exert their toxic effect at the level of the cell membrane. Their precise function is not known. In Hordeum vulgare (Barley), this protein is Probable leaf thionin.